A 45-amino-acid chain; its full sequence is Large ribosomal subunit protein bL36 (45 aa).

Positions 1–20 are disordered; that stretch reads MKVSSSIKADPSKGDKLVRR.

This sequence belongs to the bacterial ribosomal protein bL36 family.

The sequence is that of Large ribosomal subunit protein bL36 from Chlamydia abortus (strain DSM 27085 / S26/3) (Chlamydophila abortus).